Here is a 224-residue protein sequence, read N- to C-terminus: Cytidylate kinase (224 aa).

Residue 11–19 (GPAAAGKST) coordinates ATP.

This sequence belongs to the cytidylate kinase family. Type 1 subfamily.

The protein localises to the cytoplasm. The enzyme catalyses CMP + ATP = CDP + ADP. It catalyses the reaction dCMP + ATP = dCDP + ADP. The polypeptide is Cytidylate kinase (Geobacillus kaustophilus (strain HTA426)).